We begin with the raw amino-acid sequence, 172 residues long: Peptide deformylase (172 aa).

Residues cysteine 92 and histidine 134 each contribute to the Fe cation site. The active site involves glutamate 135. Position 138 (histidine 138) interacts with Fe cation.

It belongs to the polypeptide deformylase family. It depends on Fe(2+) as a cofactor.

It catalyses the reaction N-terminal N-formyl-L-methionyl-[peptide] + H2O = N-terminal L-methionyl-[peptide] + formate. Its function is as follows. Removes the formyl group from the N-terminal Met of newly synthesized proteins. Requires at least a dipeptide for an efficient rate of reaction. N-terminal L-methionine is a prerequisite for activity but the enzyme has broad specificity at other positions. The polypeptide is Peptide deformylase (Saccharophagus degradans (strain 2-40 / ATCC 43961 / DSM 17024)).